The chain runs to 338 residues: Methionine import ATP-binding protein MetN 2 (338 aa).

The ABC transporter domain maps to 2 to 242 (IEIEKVCVDF…PQHAFTQQLV (241 aa)). 39–46 (GTSGAGKS) contacts ATP.

It belongs to the ABC transporter superfamily. Methionine importer (TC 3.A.1.24) family. The complex is composed of two ATP-binding proteins (MetN), two transmembrane proteins (MetI) and a solute-binding protein (MetQ).

It localises to the cell inner membrane. It carries out the reaction L-methionine(out) + ATP + H2O = L-methionine(in) + ADP + phosphate + H(+). It catalyses the reaction D-methionine(out) + ATP + H2O = D-methionine(in) + ADP + phosphate + H(+). Its function is as follows. Part of the ABC transporter complex MetNIQ involved in methionine import. Responsible for energy coupling to the transport system. In Salmonella typhimurium (strain LT2 / SGSC1412 / ATCC 700720), this protein is Methionine import ATP-binding protein MetN 2.